Here is a 407-residue protein sequence, read N- to C-terminus: Arrestin domain-containing protein 2 (407 aa).

It belongs to the arrestin family. In terms of assembly, interacts with WWP1 (via WW domains).

This is Arrestin domain-containing protein 2 (ARRDC2) from Homo sapiens (Human).